We begin with the raw amino-acid sequence, 453 residues long: uncharacterized protein (453 aa).

[4Fe-4S] cluster-binding residues include C74, C80, C83, and C162. Residues Q286, Y315, E336, and D384 each contribute to the S-adenosyl-L-methionine site. C411 acts as the Nucleophile in catalysis.

It belongs to the class I-like SAM-binding methyltransferase superfamily. RNA M5U methyltransferase family.

This is an uncharacterized protein from Staphylococcus aureus (strain MRSA252).